A 144-amino-acid chain; its full sequence is uncharacterized protein (144 aa).

This is an uncharacterized protein from Vibrio parahaemolyticus serotype O3:K6 (strain RIMD 2210633).